The primary structure comprises 330 residues: Glycerol-3-phosphate dehydrogenase [NAD(P)+] (330 aa).

Residues Ser10, Trp11, Arg31, and Lys105 each coordinate NADPH. Lys105, Gly135, and Ser137 together coordinate sn-glycerol 3-phosphate. Ala139 lines the NADPH pocket. Sn-glycerol 3-phosphate contacts are provided by Lys190, Asp243, Ser253, Arg254, and Asn255. Residue Lys190 is the Proton acceptor of the active site. Arg254 provides a ligand contact to NADPH. The NADPH site is built by Val278 and Glu280.

Belongs to the NAD-dependent glycerol-3-phosphate dehydrogenase family.

The protein resides in the cytoplasm. The enzyme catalyses sn-glycerol 3-phosphate + NAD(+) = dihydroxyacetone phosphate + NADH + H(+). It carries out the reaction sn-glycerol 3-phosphate + NADP(+) = dihydroxyacetone phosphate + NADPH + H(+). Its pathway is membrane lipid metabolism; glycerophospholipid metabolism. Catalyzes the reduction of the glycolytic intermediate dihydroxyacetone phosphate (DHAP) to sn-glycerol 3-phosphate (G3P), the key precursor for phospholipid synthesis. This Oleidesulfovibrio alaskensis (strain ATCC BAA-1058 / DSM 17464 / G20) (Desulfovibrio alaskensis) protein is Glycerol-3-phosphate dehydrogenase [NAD(P)+].